The primary structure comprises 560 residues: Membrane-bound O-acyltransferase GUP1 (560 aa).

The Extracellular segment spans residues 1–43; sequence MSLISILSPLITSEGLDSRIKPSPKKDASTTTKPSLWKTTEFK. Residues 44–64 traverse the membrane as a helical segment; sequence FYYIAFLVVVPLMFYAGLQAS. The Cytoplasmic segment spans residues 65-101; the sequence is SPENPNYARYERLLSQGWLFGRKVDNSDSQYRFFRDN. A helical membrane pass occupies residues 102–122; it reads FALLSVLMLVHTSIKRIVLYS. Topologically, residues 123 to 131 are extracellular; that stretch reads TNITKLRFD. A helical membrane pass occupies residues 132–152; sequence LIFGLIFLVAAHGVNSIRILA. Residues 153–165 lie on the Cytoplasmic side of the membrane; it reads HMLILYAIAHVLK. Residues 166–185 form a helical membrane-spanning segment; it reads NFRRIATISIWIYGISTLFI. Over 186-276 the chain is Extracellular; the sequence is NDNFRAYPFG…AAHPIQDYSL (91 aa). A helical transmembrane segment spans residues 277 to 297; that stretch reads MNYIAYVTYTPLFIAGPIITF. Topologically, residues 298 to 322 are cytoplasmic; that stretch reads NDYVYQSKHTLPSINFKFIFYYAVR. A helical transmembrane segment spans residues 323-343; sequence FVIALLSMEFILHFLHVVAIS. Topologically, residues 344-352 are extracellular; sequence KTKAWENDT. The helical transmembrane segment at 353-373 threads the bilayer; that stretch reads PFQISMIGLFNLNIIWLKLLI. Topologically, residues 374–432 are cytoplasmic; it reads PWRLFRLWALLDGIDTPENMIRCVDNNYSSLAFWRAWHRSYNKWVVRYIYIPLGGSKNR. The next 2 membrane-spanning stretches (helical) occupy residues 433–453 and 454–474; these read VLTSLAVFSFVAIWHDIELKL and LLWGWLIVLFLLPEIFATQIF. Histidine 447 is a catalytic residue. The Cytoplasmic segment spans residues 475–485; sequence SHYTDAVWYRH. A helical membrane pass occupies residues 486-506; that stretch reads VCAVGAVFNIWVMMIANLFGF. Topologically, residues 507-526 are extracellular; sequence CLGSDGTKKLLSDMFCTVSG. Residues 527 to 547 form a helical membrane-spanning segment; the sequence is FKFVILASVSLFIAVQIMFEI. Topologically, residues 548–560 are cytoplasmic; the sequence is REEEKRHGIYLKC.

The protein belongs to the membrane-bound acyltransferase family. Interacts with mitochondrial outer membrane voltage-dependent anion channel (VDAC) POR1.

The protein resides in the cell membrane. It localises to the endoplasmic reticulum membrane. Its subcellular location is the mitochondrion membrane. Its function is as follows. Membrane-bound O-acyltransferase involved in the remodeling of glycosylphosphatidylinositol (GPI) anchors. Acts only on GPI-anchored proteins, but not on free GPI lipids. Acts as an acyltransferase for GPI anchors that adds C26 fatty acids to the sn2 position of lyso-PI-containing GPI anchors. PER1 first deacylates, GUP1 subsequently reacylates the anchor lipid, thus replacing a shorter fatty acid (C16:0 or C18:0) by C26:0. Also involved in lipid metabolism, having profound effects on sphingolipid-sterol-ordered domains integrity and assembly. Together with GUP2, has an influence on the chemical composition of the yeast extracellular matrix (yECM) in yeast multicellular aggregates, such as biofilms and colonies. Involved in cell integrity and apoptosis. This Saccharomyces cerevisiae (strain ATCC 204508 / S288c) (Baker's yeast) protein is Membrane-bound O-acyltransferase GUP1 (GUP1).